The chain runs to 484 residues: uncharacterized protein (484 aa).

The region spanning V14–S82 is the HTH gntR-type domain. Positions Q42–D61 form a DNA-binding region, H-T-H motif. K327 bears the N6-(pyridoxal phosphate)lysine mark.

It in the C-terminal section; belongs to the class-I pyridoxal-phosphate-dependent aminotransferase family. Pyridoxal 5'-phosphate serves as cofactor.

This is an uncharacterized protein from Bacillus subtilis (strain 168).